The sequence spans 207 residues: Guanylate kinase (207 aa).

The Guanylate kinase-like domain maps to Gly4 to Arg184. Ala11–Ser18 is a binding site for ATP.

Belongs to the guanylate kinase family.

The protein localises to the cytoplasm. The enzyme catalyses GMP + ATP = GDP + ADP. Essential for recycling GMP and indirectly, cGMP. This is Guanylate kinase from Escherichia coli O157:H7.